Consider the following 1050-residue polypeptide: DNA ligase 4 (1050 aa).

A disordered region spans residues 1–22 (MNTNRRSRSPDEEALEEDQHQY). Residues glutamate 329, lysine 331, leucine 332, arginine 336, glutamate 398, phenylalanine 438, glutamate 498, lysine 503, lysine 520, and lysine 522 each contribute to the ATP site. Lysine 331 (N6-AMP-lysine intermediate) is an active-site residue. Mg(2+) is bound at residue glutamate 398. Mg(2+) is bound at residue glutamate 498. Residues 691–702 (QEQERKKMEMEN) show a composition bias toward basic and acidic residues. Residues 691 to 711 (QEQERKKMEMENRKRKPATKR) are disordered. BRCT domains follow at residues 742 to 840 (ASKR…KENK) and 936 to 1049 (LRSF…EYVA).

It belongs to the ATP-dependent DNA ligase family. Mg(2+) serves as cofactor.

It localises to the nucleus. It carries out the reaction ATP + (deoxyribonucleotide)n-3'-hydroxyl + 5'-phospho-(deoxyribonucleotide)m = (deoxyribonucleotide)n+m + AMP + diphosphate.. Its function is as follows. DNA ligase involved in DNA non-homologous end joining (NHEJ); required for double-strand break (DSB) repair. This is DNA ligase 4 (mus-53) from Neurospora crassa (strain ATCC 24698 / 74-OR23-1A / CBS 708.71 / DSM 1257 / FGSC 987).